A 392-amino-acid polypeptide reads, in one-letter code: uncharacterized protein (392 aa).

A run of 10 helical transmembrane segments spans residues 2–23 (WLANFFVSASTTMIVPFLSLYI), 38–60 (SGYVFGITFLMAFLVSPFWGRFG), 73–95 (GTGIALSIFFMGFVTSVYQLFFL), 153–175 (FTYTFFITSFVIFSSVLLVLFGV), 195–217 (VLSYIFHHPALWVMMLLTMLIQT), 237–259 (VNLAFFSGMAFSATGLGSLLLAR), 272–291 (RILIGLLLAASFFFIPQALA), 297–319 (LLVFRFLFGMAMGGLLPCITAAI), 331–353 (VLGYNVSFRFLGNVLGPLLGGII), and 357–379 (FTISATFYVTAFLFFAGACMLWI).

This sequence belongs to the major facilitator superfamily.

The protein localises to the cell membrane. This is an uncharacterized protein from Bacillus subtilis (strain 168).